Here is a 374-residue protein sequence, read N- to C-terminus: Quinolinate synthase (374 aa).

Positions 53 and 70 each coordinate iminosuccinate. Cysteine 116 serves as a coordination point for [4Fe-4S] cluster. Iminosuccinate is bound by residues 148–150 (YMN) and serine 169. [4Fe-4S] cluster is bound at residue cysteine 236. Iminosuccinate-binding positions include 262 to 264 (HPE) and threonine 279. A [4Fe-4S] cluster-binding site is contributed by cysteine 327.

The protein belongs to the quinolinate synthase family. Type 3 subfamily. It depends on [4Fe-4S] cluster as a cofactor.

It localises to the cytoplasm. The catalysed reaction is iminosuccinate + dihydroxyacetone phosphate = quinolinate + phosphate + 2 H2O + H(+). Its pathway is cofactor biosynthesis; NAD(+) biosynthesis; quinolinate from iminoaspartate: step 1/1. In terms of biological role, catalyzes the condensation of iminoaspartate with dihydroxyacetone phosphate to form quinolinate. This is Quinolinate synthase from Haloarcula marismortui (strain ATCC 43049 / DSM 3752 / JCM 8966 / VKM B-1809) (Halobacterium marismortui).